A 471-amino-acid polypeptide reads, in one-letter code: 3-isopropylmalate dehydratase large subunit (471 aa).

Positions 349, 409, and 412 each coordinate [4Fe-4S] cluster.

The protein belongs to the aconitase/IPM isomerase family. LeuC type 1 subfamily. Heterodimer of LeuC and LeuD. [4Fe-4S] cluster serves as cofactor.

The catalysed reaction is (2R,3S)-3-isopropylmalate = (2S)-2-isopropylmalate. It participates in amino-acid biosynthesis; L-leucine biosynthesis; L-leucine from 3-methyl-2-oxobutanoate: step 2/4. Catalyzes the isomerization between 2-isopropylmalate and 3-isopropylmalate, via the formation of 2-isopropylmaleate. The sequence is that of 3-isopropylmalate dehydratase large subunit from Aliivibrio fischeri (strain ATCC 700601 / ES114) (Vibrio fischeri).